A 271-amino-acid polypeptide reads, in one-letter code: uncharacterized protein (271 aa).

The first 18 residues, 1–18 (MKGFFLIAGFLLFARALC), serve as a signal peptide directing secretion. Topologically, residues 19–187 (ASWNVEEGTL…FSPPPKRANY (169 aa)) are lumenal. The helical transmembrane segment at 188–208 (FLSICFSVSVVVSLIGLLGVW) threads the bilayer. Topologically, residues 209–230 (QKLLPKSNVYSVSSSSFARTFG) are cytoplasmic. The chain crosses the membrane as a helical span at residues 231-251 (FASLAVAEILLFIYWTSLSIF). At 252-271 (QFGAYAAGVAIMCGIAAKSL) the chain is on the lumenal side.

It localises to the endoplasmic reticulum membrane. This is an uncharacterized protein from Schizosaccharomyces pombe (strain 972 / ATCC 24843) (Fission yeast).